The sequence spans 340 residues: uncharacterized protein (340 aa).

This is an uncharacterized protein from Enterobacteria phage T4 (Bacteriophage T4).